The following is a 280-amino-acid chain: Tryptophan synthase alpha chain (280 aa).

Active-site proton acceptor residues include glutamate 50 and aspartate 61.

The protein belongs to the TrpA family. As to quaternary structure, tetramer of two alpha and two beta chains.

The catalysed reaction is (1S,2R)-1-C-(indol-3-yl)glycerol 3-phosphate + L-serine = D-glyceraldehyde 3-phosphate + L-tryptophan + H2O. The protein operates within amino-acid biosynthesis; L-tryptophan biosynthesis; L-tryptophan from chorismate: step 5/5. Functionally, the alpha subunit is responsible for the aldol cleavage of indoleglycerol phosphate to indole and glyceraldehyde 3-phosphate. The protein is Tryptophan synthase alpha chain of Methylorubrum extorquens (strain PA1) (Methylobacterium extorquens).